The chain runs to 201 residues: Ribonuclease HII (201 aa).

The region spanning 12–201 (DLVAGVDEVG…VRELLDVSVQ (190 aa)) is the RNase H type-2 domain. The a divalent metal cation site is built by D18, E19, and D110.

This sequence belongs to the RNase HII family. Requires Mn(2+) as cofactor. Mg(2+) serves as cofactor.

The protein localises to the cytoplasm. The catalysed reaction is Endonucleolytic cleavage to 5'-phosphomonoester.. In terms of biological role, endonuclease that specifically degrades the RNA of RNA-DNA hybrids. In Pseudomonas aeruginosa (strain LESB58), this protein is Ribonuclease HII.